Here is a 694-residue protein sequence, read N- to C-terminus: Elongation factor G (694 aa).

Positions Glu-8–Val-283 constitute a tr-type G domain. Residues Ala-17–Thr-24, Asp-81–His-85, and Asn-135–Asp-138 contribute to the GTP site.

Belongs to the TRAFAC class translation factor GTPase superfamily. Classic translation factor GTPase family. EF-G/EF-2 subfamily.

It localises to the cytoplasm. Functionally, catalyzes the GTP-dependent ribosomal translocation step during translation elongation. During this step, the ribosome changes from the pre-translocational (PRE) to the post-translocational (POST) state as the newly formed A-site-bound peptidyl-tRNA and P-site-bound deacylated tRNA move to the P and E sites, respectively. Catalyzes the coordinated movement of the two tRNA molecules, the mRNA and conformational changes in the ribosome. The polypeptide is Elongation factor G (Paramagnetospirillum magneticum (strain ATCC 700264 / AMB-1) (Magnetospirillum magneticum)).